The primary structure comprises 332 residues: UPF0194 membrane protein YbhG (332 aa).

The first 16 residues, 1-16 (MMKKPVVIGLAVVVLA), serve as a signal peptide directing secretion. A coiled-coil region spans residues 108 to 209 (EEIAQAAAAV…LNLQDSTLIA (102 aa)).

This sequence belongs to the UPF0194 family.

Its subcellular location is the periplasm. The chain is UPF0194 membrane protein YbhG from Escherichia coli (strain 55989 / EAEC).